The following is a 197-amino-acid chain: Recombination protein RecR (197 aa).

The C4-type zinc-finger motif lies at 55–70 (CVQCRDFTESEICTIC). The region spanning 78 to 173 (QQLCVVESPA…RPSRLAQGMP (96 aa)) is the Toprim domain.

The protein belongs to the RecR family.

In terms of biological role, may play a role in DNA repair. It seems to be involved in an RecBC-independent recombinational process of DNA repair. It may act with RecF and RecO. This Xanthomonas axonopodis pv. citri (strain 306) protein is Recombination protein RecR.